The primary structure comprises 324 residues: Adenine deaminase (324 aa).

Zn(2+) contacts are provided by His11, His13, and His189. Catalysis depends on Glu192, which acts as the Proton donor. Asp270 contributes to the Zn(2+) binding site. Asp271 contacts substrate.

The protein belongs to the metallo-dependent hydrolases superfamily. Adenosine and AMP deaminases family. Adenine deaminase type 2 subfamily. Zn(2+) is required as a cofactor.

It catalyses the reaction adenine + H2O + H(+) = hypoxanthine + NH4(+). Catalyzes the hydrolytic deamination of adenine to hypoxanthine. Plays an important role in the purine salvage pathway and in nitrogen catabolism. The protein is Adenine deaminase of Rhizobium meliloti (strain 1021) (Ensifer meliloti).